A 415-amino-acid polypeptide reads, in one-letter code: Serine hydroxymethyltransferase (415 aa).

Residues leucine 122 and glycine 126–leucine 128 each bind (6S)-5,6,7,8-tetrahydrofolate. Lysine 230 carries the N6-(pyridoxal phosphate)lysine modification.

Belongs to the SHMT family. As to quaternary structure, homodimer. Pyridoxal 5'-phosphate serves as cofactor.

It is found in the cytoplasm. It catalyses the reaction (6R)-5,10-methylene-5,6,7,8-tetrahydrofolate + glycine + H2O = (6S)-5,6,7,8-tetrahydrofolate + L-serine. It participates in one-carbon metabolism; tetrahydrofolate interconversion. Its pathway is amino-acid biosynthesis; glycine biosynthesis; glycine from L-serine: step 1/1. Functionally, catalyzes the reversible interconversion of serine and glycine with tetrahydrofolate (THF) serving as the one-carbon carrier. This reaction serves as the major source of one-carbon groups required for the biosynthesis of purines, thymidylate, methionine, and other important biomolecules. Also exhibits THF-independent aldolase activity toward beta-hydroxyamino acids, producing glycine and aldehydes, via a retro-aldol mechanism. This chain is Serine hydroxymethyltransferase, found in Leptothrix cholodnii (strain ATCC 51168 / LMG 8142 / SP-6) (Leptothrix discophora (strain SP-6)).